Reading from the N-terminus, the 598-residue chain is Aspartate--tRNA(Asp/Asn) ligase (598 aa).

E173 provides a ligand contact to L-aspartate. Residues 197–200 (QLFK) are aspartate. R219 contacts L-aspartate. Residues 219 to 221 (RDE) and Q228 contribute to the ATP site. H448 lines the L-aspartate pocket. Residue E482 participates in ATP binding. An L-aspartate-binding site is contributed by R489. 534–537 (GWDR) contacts ATP. The disordered stretch occupies residues 560-598 (GYDPLTAAPAPITAQQRKEAGVDAKPETKKAAAGEPAGA). Residues 575-591 (QRKEAGVDAKPETKKAA) are compositionally biased toward basic and acidic residues.

It belongs to the class-II aminoacyl-tRNA synthetase family. Type 1 subfamily. In terms of assembly, homodimer.

The protein localises to the cytoplasm. The enzyme catalyses tRNA(Asx) + L-aspartate + ATP = L-aspartyl-tRNA(Asx) + AMP + diphosphate. Its function is as follows. Aspartyl-tRNA synthetase with relaxed tRNA specificity since it is able to aspartylate not only its cognate tRNA(Asp) but also tRNA(Asn). Reaction proceeds in two steps: L-aspartate is first activated by ATP to form Asp-AMP and then transferred to the acceptor end of tRNA(Asp/Asn). In Kineococcus radiotolerans (strain ATCC BAA-149 / DSM 14245 / SRS30216), this protein is Aspartate--tRNA(Asp/Asn) ligase.